Here is a 758-residue protein sequence, read N- to C-terminus: 5-methyltetrahydropteroyltriglutamate--homocysteine methyltransferase (758 aa).

5-methyltetrahydropteroyltri-L-glutamate is bound by residues 17-20 (RELK) and K117. L-homocysteine is bound by residues 434–436 (IGS) and E487. Residues 434–436 (IGS) and E487 contribute to the L-methionine site. Residues 518–519 (RC) and W564 each bind 5-methyltetrahydropteroyltri-L-glutamate. Position 602 (D602) interacts with L-homocysteine. Residue D602 coordinates L-methionine. A 5-methyltetrahydropteroyltri-L-glutamate-binding site is contributed by E608. The Zn(2+) site is built by H644, C646, and E668. The active-site Proton donor is H697. Residue C729 coordinates Zn(2+).

Belongs to the vitamin-B12 independent methionine synthase family. Requires Zn(2+) as cofactor.

The catalysed reaction is 5-methyltetrahydropteroyltri-L-glutamate + L-homocysteine = tetrahydropteroyltri-L-glutamate + L-methionine. The protein operates within amino-acid biosynthesis; L-methionine biosynthesis via de novo pathway; L-methionine from L-homocysteine (MetE route): step 1/1. Its function is as follows. Catalyzes the transfer of a methyl group from 5-methyltetrahydrofolate to homocysteine resulting in methionine formation. This chain is 5-methyltetrahydropteroyltriglutamate--homocysteine methyltransferase, found in Yersinia pseudotuberculosis serotype O:1b (strain IP 31758).